The following is a 74-amino-acid chain: Protein SlyX homolog (74 aa).

It belongs to the SlyX family.

This chain is Protein SlyX homolog, found in Aliivibrio fischeri (strain ATCC 700601 / ES114) (Vibrio fischeri).